A 546-amino-acid polypeptide reads, in one-letter code: Pyridine nucleotide-disulfide oxidoreductase domain-containing protein 1 (546 aa).

Belongs to the class-I pyridine nucleotide-disulfide oxidoreductase family. PYROXD1 subfamily. The cofactor is FAD.

This is Pyridine nucleotide-disulfide oxidoreductase domain-containing protein 1 (pyroxd1) from Dictyostelium discoideum (Social amoeba).